We begin with the raw amino-acid sequence, 304 residues long: Aspartate carbamoyltransferase catalytic subunit (304 aa).

Carbamoyl phosphate is bound by residues arginine 54 and threonine 55. Lysine 83 lines the L-aspartate pocket. Arginine 104, histidine 132, and glutamine 135 together coordinate carbamoyl phosphate. L-aspartate-binding residues include arginine 165 and arginine 226. Carbamoyl phosphate is bound by residues leucine 265 and proline 266.

The protein belongs to the aspartate/ornithine carbamoyltransferase superfamily. ATCase family. Heterooligomer of catalytic and regulatory chains.

The catalysed reaction is carbamoyl phosphate + L-aspartate = N-carbamoyl-L-aspartate + phosphate + H(+). Its pathway is pyrimidine metabolism; UMP biosynthesis via de novo pathway; (S)-dihydroorotate from bicarbonate: step 2/3. Functionally, catalyzes the condensation of carbamoyl phosphate and aspartate to form carbamoyl aspartate and inorganic phosphate, the committed step in the de novo pyrimidine nucleotide biosynthesis pathway. This chain is Aspartate carbamoyltransferase catalytic subunit, found in Pyrobaculum islandicum (strain DSM 4184 / JCM 9189 / GEO3).